A 217-amino-acid polypeptide reads, in one-letter code: Tectonin-1 (217 aa).

Repeat copies occupy residues 2 to 37, 38 to 74, 75 to 111, 112 to 146, 147 to 182, and 183 to 217. The interval 2-217 is 6 X approximate tandem repeats; it reads VHWEKHEGEL…KLHHIYKATL (216 aa).

Belongs to the tectonin family.

The protein resides in the cell surface. Its subcellular location is the cytoplasmic vesicle membrane. In terms of biological role, probably involved in bacterial recognition. May be a lectin that function as part of a transmembrane signaling complex during phagocytosis. This is Tectonin-1 (TECA) from Physarum polycephalum (Slime mold).